The sequence spans 317 residues: MVTVIDTLARPRHPEKANRPETEVLRKPDWIRVKAPGSAGWSQTAEIVRANGLHTVCEEAGCPNIGECWEKKHATFMIMGDTCTRACAFCNVRTGMPEALDQGEPQKVGDAVAKLGLSHVVITSVDRDDLADGGAEHFARTIAAIRKASPGTTIEILTPDFLRKDGALEVVVAARPDVFNHNLETVPAKYLSVRPGARYFHSLRLLQKVKELDGSIFTKSGIMVGLGEERPEVLQLMDDLRSAEVDFITIGQYLQPTRKHHKVERFVTPDEFKAYETVAYAKGFLMVSASPLTRSSHHAGDDFEKLRAARVARLGRS.

A disordered region spans residues 1–21 (MVTVIDTLARPRHPEKANRPE). A compositionally biased stretch (basic and acidic residues) spans 12 to 21 (RHPEKANRPE). Cys57, Cys62, Cys68, Cys83, Cys87, Cys90, and Ser296 together coordinate [4Fe-4S] cluster. In terms of domain architecture, Radical SAM core spans 69–285 (WEKKHATFMI…ETVAYAKGFL (217 aa)).

This sequence belongs to the radical SAM superfamily. Lipoyl synthase family. The cofactor is [4Fe-4S] cluster.

Its subcellular location is the cytoplasm. It carries out the reaction [[Fe-S] cluster scaffold protein carrying a second [4Fe-4S](2+) cluster] + N(6)-octanoyl-L-lysyl-[protein] + 2 oxidized [2Fe-2S]-[ferredoxin] + 2 S-adenosyl-L-methionine + 4 H(+) = [[Fe-S] cluster scaffold protein] + N(6)-[(R)-dihydrolipoyl]-L-lysyl-[protein] + 4 Fe(3+) + 2 hydrogen sulfide + 2 5'-deoxyadenosine + 2 L-methionine + 2 reduced [2Fe-2S]-[ferredoxin]. It participates in protein modification; protein lipoylation via endogenous pathway; protein N(6)-(lipoyl)lysine from octanoyl-[acyl-carrier-protein]: step 2/2. Its function is as follows. Catalyzes the radical-mediated insertion of two sulfur atoms into the C-6 and C-8 positions of the octanoyl moiety bound to the lipoyl domains of lipoate-dependent enzymes, thereby converting the octanoylated domains into lipoylated derivatives. This is Lipoyl synthase from Xanthobacter autotrophicus (strain ATCC BAA-1158 / Py2).